Reading from the N-terminus, the 284-residue chain is Nucleoid occlusion protein (284 aa).

The H-T-H motif DNA-binding region spans 143–162; it reads EALAQRVGKSQSAIANKMRL.

It belongs to the ParB family.

The protein resides in the cytoplasm. Its subcellular location is the nucleoid. In terms of biological role, effects nucleoid occlusion by binding relatively nonspecifically to DNA and preventing the assembly of the division machinery in the vicinity of the nucleoid, especially under conditions that disturb the cell cycle. It helps to coordinate cell division and chromosome segregation by preventing the formation of the Z ring through the nucleoid, which would cause chromosome breakage. This is Nucleoid occlusion protein from Listeria monocytogenes serotype 4b (strain CLIP80459).